Reading from the N-terminus, the 323-residue chain is MIDFGNFYSLIAKNHLSHWLETLPAQIANWQREQQHGLFKQWSNAVEFLPEIKPYRLDLLHSVTAESEEPLSAGQIKRIETLMRNLMPWRKGPFSLYGVNIDTEWRSDWKWDRVMPHLSDLTGRTILDVGCGSGYHMWRMIGAGAHLAVGIDPTQLFLCQFEAVRKLLGNDQRAHLLPLGIEQLPALKAFDTVFSMGVLYHRRSPLEHLWQLKDQLVNEGELVLETLVIDGDENTVLVPGDRYAQMRNVYFIPSALALKNWLKKCGFVDIRIADVSVTTTEEQRRTEWMVTESLADFLDPHDPGKTVEGYPAPKRAVLIARKP.

Carboxy-S-adenosyl-L-methionine-binding positions include lysine 91, tryptophan 105, lysine 110, glycine 130, 152-154 (DPT), 181-182 (IE), methionine 196, tyrosine 200, and arginine 315.

The protein belongs to the class I-like SAM-binding methyltransferase superfamily. CmoB family. In terms of assembly, homotetramer.

The catalysed reaction is carboxy-S-adenosyl-L-methionine + 5-hydroxyuridine(34) in tRNA = 5-carboxymethoxyuridine(34) in tRNA + S-adenosyl-L-homocysteine + H(+). Catalyzes carboxymethyl transfer from carboxy-S-adenosyl-L-methionine (Cx-SAM) to 5-hydroxyuridine (ho5U) to form 5-carboxymethoxyuridine (cmo5U) at position 34 in tRNAs. The polypeptide is tRNA U34 carboxymethyltransferase (Escherichia coli O6:H1 (strain CFT073 / ATCC 700928 / UPEC)).